The primary structure comprises 222 residues: MAFGDVTTPQGLKELNAFLADNSYISGYTPSKADLSVFDALGKAPSADNVNVARWYRHIASFEAAERAAWSGTPLPQLAGGKPTVAAAAKPAADDDDDVDLFGSDDEEDEEAERIKQERVAAYAAKKSKKPALIAKSSVLLDVKPWDDETDMKEMENNVRTIEMDGLLWGASKLVPVGYGINKLQIMCVIEDDKVSIDLLQEKIEEFEDFVQSVDIAAFNKI.

Positions 90 to 111 (KPAADDDDDVDLFGSDDEEDEE) are disordered. Residues 94–111 (DDDDDVDLFGSDDEEDEE) show a composition bias toward acidic residues. The residue at position 104 (Ser-104) is a Phosphoserine.

It belongs to the EF-1-beta/EF-1-delta family. EF-1 is composed of 4 subunits: alpha, beta, beta' and gamma. Phosphorylation affects the GDP/GTP exchange rate.

Functionally, EF-1-beta and EF-1-delta stimulate the exchange of GDP bound to EF-1-alpha to GTP. The chain is Probable elongation factor 1-beta from Drosophila melanogaster (Fruit fly).